We begin with the raw amino-acid sequence, 514 residues long: MTAKRKPTALLILDGWGYREGKDSNAIANANTPFWDQISSQNPHVLIHTSGMAVGLPEGQMGNSEVGHMNLGAGRIVYQNFTRITKDIEDGVFAQNPAISSAIDKAVSNGKAVHLLGLLSPGGVHSHEDHILAACKVARERGADKVFVHAFLDGRDTPPRSAQPSLERTDKLLKELGCGRVASIIGRYYAMDRDNRWDRVQAAYDLLTLGEAPYHAESAVQALTAAYERGEDDEFVKATLIKGSSDNDAVISDGDAVIFMNFRADRARELTRCFVEQDFDGFQRNKLPKLADFVMLTEYSANIHTACAYPATELTNSIGEYMATLHKTQLRIAETEKYAHVTFFFSGGKEALFEGEERILIPSPDVATYDLKPEMSAPEVTDKLVEAIKSGKFDLIVCNYANGDMVGHSGVYDAAMKAAECIDQCLKRIAEALNEVGGQCLITADHGNAEQMVDENGQPHTQHTTGPVPLIYIGPKNISLKEDGRLCDIAPSLLDLMELEKPREMTGESLIVQN.

Asp14 and Ser64 together coordinate Mn(2+). The Phosphoserine intermediate role is filled by Ser64. Substrate-binding positions include His125, 155–156, Arg187, Arg193, 263–266, and Lys337; these read RD and RADR. Residues Asp404, His408, Asp445, His446, and His463 each coordinate Mn(2+).

Belongs to the BPG-independent phosphoglycerate mutase family. In terms of assembly, monomer. The cofactor is Mn(2+).

The catalysed reaction is (2R)-2-phosphoglycerate = (2R)-3-phosphoglycerate. It functions in the pathway carbohydrate degradation; glycolysis; pyruvate from D-glyceraldehyde 3-phosphate: step 3/5. In terms of biological role, catalyzes the interconversion of 2-phosphoglycerate and 3-phosphoglycerate. In Hahella chejuensis (strain KCTC 2396), this protein is 2,3-bisphosphoglycerate-independent phosphoglycerate mutase.